The sequence spans 179 residues: Large ribosomal subunit protein uL6 (179 aa).

Belongs to the universal ribosomal protein uL6 family. Part of the 50S ribosomal subunit.

This protein binds to the 23S rRNA, and is important in its secondary structure. It is located near the subunit interface in the base of the L7/L12 stalk, and near the tRNA binding site of the peptidyltransferase center. In Spiroplasma kunkelii, this protein is Large ribosomal subunit protein uL6.